The chain runs to 508 residues: DNA-directed RNA polymerase subunit Rpo1C (508 aa).

Positions 1 to 123 (MIIWKDTAKN…REKYEYEKKV (123 aa)) are unknown. The segment at 124–508 (SSQVLDVIAE…IYKGYPKTKK (385 aa)) is DNA-directed RNA polymerase subunit Rpo1C.

It belongs to the RNA polymerase beta' chain family. As to quaternary structure, part of the RNA polymerase complex.

The protein localises to the cytoplasm. The enzyme catalyses RNA(n) + a ribonucleoside 5'-triphosphate = RNA(n+1) + diphosphate. In terms of biological role, DNA-dependent RNA polymerase (RNAP) catalyzes the transcription of DNA into RNA using the four ribonucleoside triphosphates as substrates. Forms part of the jaw domain. This Thermoplasma volcanium (strain ATCC 51530 / DSM 4299 / JCM 9571 / NBRC 15438 / GSS1) protein is DNA-directed RNA polymerase subunit Rpo1C.